The chain runs to 141 residues: NADH dehydrogenase [ubiquinone] 1 alpha subcomplex subunit 11 (141 aa).

Position 2 is an N-acetylalanine (alanine 2). A run of 2 helical transmembrane segments spans residues 21 to 43 and 58 to 80; these read KAYS…RVTL and QYTF…SAHV.

It belongs to the complex I NDUFA11 subunit family. Complex I is composed of 45 different subunits.

It is found in the mitochondrion inner membrane. In terms of biological role, accessory subunit of the mitochondrial membrane respiratory chain NADH dehydrogenase (Complex I), that is believed not to be involved in catalysis. Complex I functions in the transfer of electrons from NADH to the respiratory chain. The immediate electron acceptor for the enzyme is believed to be ubiquinone. The chain is NADH dehydrogenase [ubiquinone] 1 alpha subcomplex subunit 11 (NDUFA11) from Homo sapiens (Human).